A 467-amino-acid polypeptide reads, in one-letter code: Prenyltransferase GME11375 (467 aa).

Glu-93 provides a ligand contact to L-tryptophan. 6 residues coordinate dimethylallyl diphosphate: Arg-108, Lys-196, Tyr-198, Lys-266, Tyr-268, and Tyr-436.

The protein belongs to the tryptophan dimethylallyltransferase family.

Its pathway is secondary metabolite biosynthesis. In terms of biological role, prenyltransferase; part of the gene cluster that mediates the biosynthesis of dibenzodioxocinones such as pestalotiollide B, a novel class of inhibitors against cholesterol ester transfer protein (CEPT). The biosynthesis initiates from condensation of acetate and malonate units catalyzed by the non-reducing PKS pks8/GME11356. Pks8/GME11356 lacks a thioesterase (TE) domain, which is important to the cyclizing of the third ring of atrochrysone carboxylic acid, and the esterase GME11355 might play the role of TE and catalyzes the cyclization reaction of the C ring. The lactamase-like protein GME11357 (or other beta-lactamases in Pestalotiopsis microspora) probably hydrolyzes the thioester bond between the ACP of pks8/GME11356 and the intermediate to release atrochrysone carboxylic acid, which is spontaneously dehydrates to form endocrocin anthrone. Endocrocin anthrone is further converted to emodin via the endocrocin intermediate. Emodin is then oxidized by several enzymes such as the Baeyer-Villiger oxidase GME11358, the oxidoreductase GME11367, the short chain dehydrogenase/reductase GME11373, as well as by other oxidoreductases from the cluster, to modify the A and C rings and open the B ring, and finally yield monodictyphenone. The prenyltransferase GME11375 may catalyze the addition reaction between the C5 side chains and the carbon bone of dibenzodioxocinones. The remaining biochemical reactions to the final product dibenzodioxocinones should be methylation catalyzed by methyltransferase GME11366 and reduction and lactonization reaction catalyzed by a series of oxidordeuctases. The chain is Prenyltransferase GME11375 from Pestalotiopsis microspora.